We begin with the raw amino-acid sequence, 370 residues long: DNA replication and repair protein RecF (370 aa).

Residue 30-37 (GENAQGKT) participates in ATP binding.

It belongs to the RecF family.

Its subcellular location is the cytoplasm. Its function is as follows. The RecF protein is involved in DNA metabolism; it is required for DNA replication and normal SOS inducibility. RecF binds preferentially to single-stranded, linear DNA. It also seems to bind ATP. This Bacillus pumilus (strain SAFR-032) protein is DNA replication and repair protein RecF.